The sequence spans 187 residues: Adenylate kinase (187 aa).

10-15 (GSGKGT) lines the ATP pocket. Positions 30-59 (STGDLLRAEVAAGSPLGLKAKEVMARGDLV) are NMP. AMP-binding positions include T31, R36, 57-59 (DLV), 85-88 (GYPR), and Q92. Residues 126-136 (GRAKAEGREDD) are LID. R127 provides a ligand contact to ATP. The AMP site is built by R133 and R144. Position 172 (G172) interacts with ATP.

It belongs to the adenylate kinase family. As to quaternary structure, monomer.

The protein localises to the cytoplasm. It carries out the reaction AMP + ATP = 2 ADP. It functions in the pathway purine metabolism; AMP biosynthesis via salvage pathway; AMP from ADP: step 1/1. Functionally, catalyzes the reversible transfer of the terminal phosphate group between ATP and AMP. Plays an important role in cellular energy homeostasis and in adenine nucleotide metabolism. The polypeptide is Adenylate kinase (Xanthomonas oryzae pv. oryzae (strain MAFF 311018)).